The primary structure comprises 318 residues: Ribose-phosphate pyrophosphokinase (318 aa).

ATP contacts are provided by residues 46–48 (DGE) and 105–106 (RQ). Mg(2+)-binding residues include histidine 139 and aspartate 178. The active site involves lysine 201. D-ribose 5-phosphate contacts are provided by residues arginine 203, aspartate 227, and 231-235 (DTAGT).

It belongs to the ribose-phosphate pyrophosphokinase family. Class I subfamily. In terms of assembly, homohexamer. Mg(2+) serves as cofactor.

It localises to the cytoplasm. It carries out the reaction D-ribose 5-phosphate + ATP = 5-phospho-alpha-D-ribose 1-diphosphate + AMP + H(+). It participates in metabolic intermediate biosynthesis; 5-phospho-alpha-D-ribose 1-diphosphate biosynthesis; 5-phospho-alpha-D-ribose 1-diphosphate from D-ribose 5-phosphate (route I): step 1/1. Functionally, involved in the biosynthesis of the central metabolite phospho-alpha-D-ribosyl-1-pyrophosphate (PRPP) via the transfer of pyrophosphoryl group from ATP to 1-hydroxyl of ribose-5-phosphate (Rib-5-P). This Helicobacter pylori (strain ATCC 700392 / 26695) (Campylobacter pylori) protein is Ribose-phosphate pyrophosphokinase.